Here is a 142-residue protein sequence, read N- to C-terminus: Large ribosomal subunit protein uL13 (142 aa).

This sequence belongs to the universal ribosomal protein uL13 family. Part of the 50S ribosomal subunit.

Its function is as follows. This protein is one of the early assembly proteins of the 50S ribosomal subunit, although it is not seen to bind rRNA by itself. It is important during the early stages of 50S assembly. The protein is Large ribosomal subunit protein uL13 of Bordetella avium (strain 197N).